Here is a 144-residue protein sequence, read N- to C-terminus: UPF0225 protein RSc0270 (144 aa).

This sequence belongs to the UPF0225 family.

This chain is UPF0225 protein RSc0270, found in Ralstonia nicotianae (strain ATCC BAA-1114 / GMI1000) (Ralstonia solanacearum).